A 248-amino-acid polypeptide reads, in one-letter code: Protein maestro (248 aa).

Residues 1–23 (MEQTRKIPNQPLPTPTSQSKKRR) form a disordered region. The stretch at 128 to 163 (SFFIDITLQARTLLDDEDDSVRYSAFVLFGQLASFA) is one HEAT repeat.

As to expression, prominent expression seen in testis, brain, liver and heart. Weakly expressed in the kidney.

Its subcellular location is the nucleus. The protein resides in the nucleolus. In Mus musculus (Mouse), this protein is Protein maestro (Mro).